Here is a 102-residue protein sequence, read N- to C-terminus: MSSQKIRIRLKAFDHKTLDQSAEKIVETAKRTGARVSGPIPLPTEKSIYTILRSPHVNKDSREQFEMRTHKRLIDILEPTSKTVDALMRLDLPAGVDIEIKL.

Belongs to the universal ribosomal protein uS10 family. In terms of assembly, part of the 30S ribosomal subunit.

Involved in the binding of tRNA to the ribosomes. This is Small ribosomal subunit protein uS10 from Desulfitobacterium hafniense (strain DSM 10664 / DCB-2).